A 494-amino-acid chain; its full sequence is MKTIAFDSNKYLNLQRDHILERISQFDGKLYMEFGGKMLEDYHAARVLPGYEPDNKIKLLKELKEQVEIVIAINANNIEHSKARGDLGISYDQEVFRLIDKFNTLDIYVGSVVITQYNNQPAADAFRKQLEKNGIASYLHYPIKGYPTDINHIISSEGMGKNDYIKTSRNLIVVTAPGPGSGKLATCMSQMYHDQINGVKSGYAKFETFPVWNLPLHHPVNLAYEAATADLDDVNMIDPFHLETYGKTAVNYNRDIEVFPVLNRTFERILSKSPYASPTDMGVNMVGFSIVNEEAAIEASKQEIIRRYYQTLVDFKAERVTESAVKKIELLMNDIGVTPDDRHVTVAAHQKAEQTGQPALALQLPNGQIVTGKTSGLFGPTAAVIINAIKTLAKIDKTTHLIEPEYVKPIQGLKVNHLGSHNPRLHSNEILIALAITAMTSEEANLAMKELGNLKGSEAHSTVILTEEDKNVLRKLGVNITFDPVYQHHKLYRK.

This sequence belongs to the UPF0371 family.

This is UPF0371 protein SpyM3_1021 from Streptococcus pyogenes serotype M3 (strain ATCC BAA-595 / MGAS315).